Consider the following 282-residue polypeptide: 40S small subunit processome assembly factor 1 (282 aa).

Disordered stretches follow at residues 27–98 (YDLG…SEVP) and 121–143 (FHSRSEKRKPKSEEDKPAKNKTK). Basic and acidic residues predominate over residues 48-59 (KRDSETVADRAA). Phosphoserine occurs at positions 67 and 75. Residues 89 to 98 (SAPAAPSEVP) are compositionally biased toward low complexity. Residues 131–143 (KSEEDKPAKNKTK) show a composition bias toward basic and acidic residues. N6-acetyllysine is present on lysine 173. Residues 208–226 (EKRTSMEEEKRAAQETDIF) show a composition bias toward basic and acidic residues. The interval 208-254 (EKRTSMEEEKRAAQETDIFKRKKRKGRSQEDRRSKKLAPSILSSGRA) is disordered. Serine 268 is modified (phosphoserine).

In terms of assembly, part of the small subunit (SSU) processome, composed of more than 70 proteins and the RNA chaperone small nucleolar RNA (snoRNA) U3.

The protein localises to the chromosome. It is found in the nucleus. The protein resides in the nucleolus. In terms of biological role, part of the small subunit (SSU) processome, first precursor of the small eukaryotic ribosomal subunit. During the assembly of the SSU processome in the nucleolus, many ribosome biogenesis factors, an RNA chaperone and ribosomal proteins associate with the nascent pre-rRNA and work in concert to generate RNA folding, modifications, rearrangements and cleavage as well as targeted degradation of pre-ribosomal RNA by the RNA exosome. Prevents helicase DHX37 to be recruited before post-A1 state. The sequence is that of 40S small subunit processome assembly factor 1 from Rattus norvegicus (Rat).